We begin with the raw amino-acid sequence, 89 residues long: UPF0297 protein OB2008 (89 aa).

It belongs to the UPF0297 family.

The chain is UPF0297 protein OB2008 from Oceanobacillus iheyensis (strain DSM 14371 / CIP 107618 / JCM 11309 / KCTC 3954 / HTE831).